Reading from the N-terminus, the 902-residue chain is MWIPSKLTRPGRLHNAIVRPRVLDLLQHATCYKLVLFRSPAGYGKTTMAAQWLADKPNLGWYSIDDSDNDPFRFMNYLLQAINKATHNACPNAQKLAEKRQFSSLHSLFSEVFAEMADYHGECYVVLDDYHLIHDETIHEAMRFFLKHMPDNLTLVVTSRSTPPLGTANLRVRDLMIEIGNELLAFDTEETTRFFNQRVSDGIDALTANHLRDYVEGWPSAMQLIALQAQHQHRTLAQTIESVSHFNHAHLWDYLVEEVFDLLDDETRYFLMQCSVLDHFDDALVSSLTGRDDALAMIESLNRFGLFISPLEGETNWYRFHNLFAEFLAHQRQARIPQQEQDLQRAAAKAWLEAAAPHQALRHAHLAQDTELLASILSQYGWKMFNQGELEVLEAAINQLSPPQLYREPKLCMLQAWLAQSQHRYNDVGALLAKAAKEMKALNVELSTKEQGEFNALRAQVAINQNEPEKALELAELALSQLDHTTYRSRIVATSVVGEVNHVLGHLSRALSMMQQTEKLARQYQVYHQALWALLQQSEILLAQGYVQAAYEVQDNAFKLIEEQQLHQVPLHEFLLRIRAQILWCWNRLDEAEQAAYKGLSVLENHSQSKHLHCYSMLARIAIGRGELDKAGRFIEQIQHLLKQSTYHVDWTANASLSLLLYWQVKENSTEIRQWLQSSTRPDKACNHFSQLQWRNIARAQIQLGELSEARHTLDFIQEQAQEYQLVTDTNRNLIVEALLAITEGDDLQACHKLKQALRLTNQTGMIGNFLIDGSKIGHLLEKLVHKGELGDLERHRAHLLLKEISTTQRSRSIHFDEEFVEKLVNHPNIPELVRTSPLTQREWQVLGLIYSGFSNEQIAHELDVAGTTIKTHIRNLYQKLNIANRKEAVQTAEQLLQLMGY.

39–46 (SPAGYGKT) contacts ATP. The region spanning 832–897 (ELVRTSPLTQ…EAVQTAEQLL (66 aa)) is the HTH luxR-type domain. The H-T-H motif DNA-binding region spans 856–875 (NEQIAHELDVAGTTIKTHIR).

This sequence belongs to the MalT family. Monomer in solution. Oligomerizes to an active state in the presence of the positive effectors ATP and maltotriose.

Its activity is regulated as follows. Activated by ATP and maltotriose, which are both required for DNA binding. Functionally, positively regulates the transcription of the maltose regulon whose gene products are responsible for uptake and catabolism of malto-oligosaccharides. Specifically binds to the promoter region of its target genes, recognizing a short DNA motif called the MalT box. This is HTH-type transcriptional regulator MalT from Vibrio cholerae serotype O1 (strain ATCC 39315 / El Tor Inaba N16961).